The following is a 679-amino-acid chain: Single-strand DNA endonuclease ASTE1 (679 aa).

Residues 351–400 (TILPTQVENMQQPNAHRISQPIRQIIYGLLLNASPHLDKTSWNALPPQPL) form an interaction with SHLD2 region. A disordered region spans residues 625 to 645 (RSNSKKKRQKKQNTSCSKNRG). A compositionally biased stretch (basic residues) spans 626-635 (SNSKKKRQKK).

Belongs to the asteroid family. As to quaternary structure, interacts with SHLD1, SHLD2, SHLD3, RIF1 and MAD2L2/REV7.

Structure-specific DNA endonuclease that specifically cleaves single-stranded DNA and 3' overhang DNA. Contributes to the control of DNA double-strand break repair choice by antagonizing BRCA1-dependent homologous recombination (HR) and promoting non-homologous end-joining (NHEJ). Recruited to the single-stranded DNA ends by SHLD2 and cleaves the 3' exposed DNA ends, therefore inhibiting DNA end resection (necessary for HR) and promoting DNA end protection (necessary for NHEJ). This Pongo abelii (Sumatran orangutan) protein is Single-strand DNA endonuclease ASTE1 (ASTE1).